The chain runs to 165 residues: Endoribonuclease YbeY (165 aa).

Zn(2+) is bound by residues His-130, His-134, and His-140.

The protein belongs to the endoribonuclease YbeY family. Zn(2+) is required as a cofactor.

It localises to the cytoplasm. Its function is as follows. Single strand-specific metallo-endoribonuclease involved in late-stage 70S ribosome quality control and in maturation of the 3' terminus of the 16S rRNA. This is Endoribonuclease YbeY from Streptococcus pneumoniae serotype 4 (strain ATCC BAA-334 / TIGR4).